Consider the following 373-residue polypeptide: tRNA-specific 2-thiouridylase MnmA (373 aa).

ATP-binding positions include 18-25 (AMSGGVDS) and leucine 44. Cysteine 117 serves as the catalytic Nucleophile. Cysteine 117 and cysteine 214 are disulfide-bonded. Glycine 141 contributes to the ATP binding site. The interval 163–165 (RDQ) is interaction with tRNA. Cysteine 214 (cysteine persulfide intermediate) is an active-site residue.

It belongs to the MnmA/TRMU family.

The protein localises to the cytoplasm. The enzyme catalyses S-sulfanyl-L-cysteinyl-[protein] + uridine(34) in tRNA + AH2 + ATP = 2-thiouridine(34) in tRNA + L-cysteinyl-[protein] + A + AMP + diphosphate + H(+). Its function is as follows. Catalyzes the 2-thiolation of uridine at the wobble position (U34) of tRNA, leading to the formation of s(2)U34. This chain is tRNA-specific 2-thiouridylase MnmA, found in Paramagnetospirillum magneticum (strain ATCC 700264 / AMB-1) (Magnetospirillum magneticum).